A 334-amino-acid chain; its full sequence is S-adenosylmethionine decarboxylase proenzyme 2 (334 aa).

Phe7 contacts substrate. Active-site residues include Glu8 and Glu11. Glu67 provides a ligand contact to substrate. The Schiff-base intermediate with substrate; via pyruvic acid role is filled by Ser68. Ser68 is modified (pyruvic acid (Ser); by autocatalysis). Cys82 (proton donor; for catalytic activity) is an active-site residue. Residue Phe223 coordinates substrate. Catalysis depends on proton acceptor; for processing activity residues Ser229 and His243. Glu247 is a binding site for substrate. Position 298 is a phosphoserine (Ser298).

This sequence belongs to the eukaryotic AdoMetDC family. Heterotetramer of two alpha and two beta chains. Requires pyruvate as cofactor. Post-translationally, is synthesized initially as an inactive proenzyme. Formation of the active enzyme involves a self-maturation process in which the active site pyruvoyl group is generated from an internal serine residue via an autocatalytic post-translational modification. Two non-identical subunits are generated from the proenzyme in this reaction, and the pyruvate is formed at the N-terminus of the alpha chain, which is derived from the carboxyl end of the proenzyme. The post-translation cleavage follows an unusual pathway, termed non-hydrolytic serinolysis, in which the side chain hydroxyl group of the serine supplies its oxygen atom to form the C-terminus of the beta chain, while the remainder of the serine residue undergoes an oxidative deamination to produce ammonia and the pyruvoyl group blocking the N-terminus of the alpha chain.

It carries out the reaction S-adenosyl-L-methionine + H(+) = S-adenosyl 3-(methylsulfanyl)propylamine + CO2. The protein operates within amine and polyamine biosynthesis; S-adenosylmethioninamine biosynthesis; S-adenosylmethioninamine from S-adenosyl-L-methionine: step 1/1. In terms of biological role, essential for biosynthesis of the polyamines spermidine and spermine. Promotes maintenance and self-renewal of embryonic stem cells, by maintaining spermine levels. The sequence is that of S-adenosylmethionine decarboxylase proenzyme 2 (Amd2) from Mus spretus (Western Mediterranean mouse).